The primary structure comprises 451 residues: uncharacterized protein (451 aa).

In terms of domain architecture, HD spans 50 to 147; that stretch reads RFEHSLGTMF…DVDADRMDYL (98 aa).

This is an uncharacterized protein from Methanocaldococcus jannaschii (strain ATCC 43067 / DSM 2661 / JAL-1 / JCM 10045 / NBRC 100440) (Methanococcus jannaschii).